A 272-amino-acid chain; its full sequence is Alkaline ceramidase (272 aa).

2 helical membrane passes run 34-54 (FANT…IMLL) and 61-81 (VNGG…ASTY). H83 contacts Zn(2+). Transmembrane regions (helical) follow at residues 96–116 (LSLV…MKWF), 124–144 (LTVV…LCFL), 148–168 (LNAI…RYEG), and 183–203 (ILAL…LCDF). H213 and H217 together coordinate Zn(2+). The chain crosses the membrane as a helical span at residues 214 to 234 (ALFHLLAGLAGYTIFIMFSMI). N256 carries N-linked (GlcNAc...) asparagine glycosylation.

It belongs to the alkaline ceramidase family. Zn(2+) serves as cofactor.

It localises to the membrane. It carries out the reaction an N-acylsphing-4-enine + H2O = sphing-4-enine + a fatty acid. In terms of biological role, hydrolyzes the sphingolipid ceramide into sphingosine and free fatty acid. The polypeptide is Alkaline ceramidase (Caenorhabditis briggsae).